We begin with the raw amino-acid sequence, 456 residues long: GTPase Der (456 aa).

EngA-type G domains lie at 4–169 (PVVA…PSKD) and 178–353 (VQLA…DQSR). GTP contacts are provided by residues 10–17 (GRPNVGKS), 57–61 (DTGGL), 120–123 (NKCE), 184–191 (GRPNVGKS), 231–235 (DTAGI), and 296–299 (NKWD). A KH-like domain is found at 354 to 439 (RRVTTSVVNE…PIKLFWRGKQ (86 aa)).

It belongs to the TRAFAC class TrmE-Era-EngA-EngB-Septin-like GTPase superfamily. EngA (Der) GTPase family. Associates with the 50S ribosomal subunit.

Its function is as follows. GTPase that plays an essential role in the late steps of ribosome biogenesis. The protein is GTPase Der of Prochlorococcus marinus (strain NATL1A).